The primary structure comprises 209 residues: Thymidylate kinase (209 aa).

Residue 10–17 participates in ATP binding; it reads GLDGAGKS.

It belongs to the thymidylate kinase family.

It carries out the reaction dTMP + ATP = dTDP + ADP. In terms of biological role, phosphorylation of dTMP to form dTDP in both de novo and salvage pathways of dTTP synthesis. The sequence is that of Thymidylate kinase from Francisella tularensis subsp. holarctica (strain FTNF002-00 / FTA).